Reading from the N-terminus, the 802-residue chain is ATP-dependent RNA helicase dbp4 (802 aa).

The interval 1–24 (MAPINGSRNGKHSKPQRGGNLKRK) is disordered. Residues 9–24 (NGKHSKPQRGGNLKRK) are compositionally biased toward basic residues. Residues 47–75 (EQFTDLPLSEPTASGLASSHYKTLTDIQS) carry the Q motif motif. Positions 78–252 (ISHALKGRDI…RLSLQDPEYV (175 aa)) constitute a Helicase ATP-binding domain. An ATP-binding site is contributed by 91–98 (AKTGSGKT). A DEAD box motif is present at residues 200-203 (DEAD). The region spanning 274 to 437 (PLPQKLDVLW…SIKDQLQNMC (164 aa)) is the Helicase C-terminal domain. 3 disordered regions span residues 494-538 (GDDT…KYDR), 589-614 (DKDL…KGAK), and 685-802 (LAEE…GLLG). The span at 520-538 (GEKKKTKKDETQVRTKYDR) shows a compositional bias: basic and acidic residues. Positions 685–704 (LAEEAERTRQADLEDKEVAK) are enriched in basic and acidic residues. The segment covering 705 to 714 (QKKREKKEKR) has biased composition (basic residues).

This sequence belongs to the DEAD box helicase family. DDX10/DBP4 subfamily. In terms of assembly, interacts with the U3 and U14 snoRNAs. Associates with pre-ribosomal complexes.

The protein localises to the nucleus. Its subcellular location is the nucleolus. It catalyses the reaction ATP + H2O = ADP + phosphate + H(+). Its function is as follows. ATP-dependent RNA helicase required for ribosome biogenesis. Involved in the release of U14 snoRNA in pre-ribosomal complexes. Required for pre-rRNA cleavage at site A2. This is ATP-dependent RNA helicase dbp4 (dbp4) from Aspergillus niger (strain ATCC MYA-4892 / CBS 513.88 / FGSC A1513).